A 304-amino-acid chain; its full sequence is D-alanine--D-alanine ligase (304 aa).

Residues 103-301 form the ATP-grasp domain; sequence KQVWLALGLP…FDDLVWRILE (199 aa). 132 to 187 contributes to the ATP binding site; sequence VEMLGFPVIIKPAKEGSSVGVSRVFALEHLEEAVALAARYEGELLMEQLIEGDELT. Asp-254, Glu-268, and Asn-270 together coordinate Mg(2+).

It belongs to the D-alanine--D-alanine ligase family. Mg(2+) serves as cofactor. It depends on Mn(2+) as a cofactor.

It localises to the cytoplasm. The catalysed reaction is 2 D-alanine + ATP = D-alanyl-D-alanine + ADP + phosphate + H(+). It functions in the pathway cell wall biogenesis; peptidoglycan biosynthesis. Cell wall formation. The chain is D-alanine--D-alanine ligase from Xylella fastidiosa (strain Temecula1 / ATCC 700964).